The following is a 514-amino-acid chain: ATP synthase subunit alpha (514 aa).

170–177 contributes to the ATP binding site; sequence GDRQTGKT.

The protein belongs to the ATPase alpha/beta chains family. F-type ATPases have 2 components, CF(1) - the catalytic core - and CF(0) - the membrane proton channel. CF(1) has five subunits: alpha(3), beta(3), gamma(1), delta(1), epsilon(1). CF(0) has three main subunits: a(1), b(2) and c(9-12). The alpha and beta chains form an alternating ring which encloses part of the gamma chain. CF(1) is attached to CF(0) by a central stalk formed by the gamma and epsilon chains, while a peripheral stalk is formed by the delta and b chains.

The protein resides in the cell inner membrane. It carries out the reaction ATP + H2O + 4 H(+)(in) = ADP + phosphate + 5 H(+)(out). Its function is as follows. Produces ATP from ADP in the presence of a proton gradient across the membrane. The alpha chain is a regulatory subunit. This is ATP synthase subunit alpha from Acinetobacter baumannii (strain AB307-0294).